The primary structure comprises 238 residues: Protein CPn_0658/CP_0089/CPj0658/CpB0684 (238 aa).

The protein belongs to the chlamydial CPn_0658/CT_538/TC_0825 family.

In Chlamydia pneumoniae (Chlamydophila pneumoniae), this protein is Protein CPn_0658/CP_0089/CPj0658/CpB0684.